The following is a 274-amino-acid chain: NH(3)-dependent NAD(+) synthetase (274 aa).

46–53 lines the ATP pocket; it reads GISGGQDS. Asp-52 serves as a coordination point for Mg(2+). A deamido-NAD(+)-binding site is contributed by Arg-140. Position 160 (Thr-160) interacts with ATP. Glu-165 is a binding site for Mg(2+). Residues Lys-173 and Asp-180 each contribute to the deamido-NAD(+) site. Positions 189 and 211 each coordinate ATP. 260–261 contacts deamido-NAD(+); the sequence is HK.

It belongs to the NAD synthetase family. Homodimer.

The catalysed reaction is deamido-NAD(+) + NH4(+) + ATP = AMP + diphosphate + NAD(+) + H(+). It functions in the pathway cofactor biosynthesis; NAD(+) biosynthesis; NAD(+) from deamido-NAD(+) (ammonia route): step 1/1. In terms of biological role, catalyzes the ATP-dependent amidation of deamido-NAD to form NAD. Uses ammonia as a nitrogen source. This Streptococcus uberis (strain ATCC BAA-854 / 0140J) protein is NH(3)-dependent NAD(+) synthetase.